We begin with the raw amino-acid sequence, 106 residues long: Cuticle protein CP14.6 (106 aa).

A signal peptide spans 1–16; that stretch reads MKSFFVVALLVAAAAA. The Chitin-binding type R&amp;R domain occupies 37 to 106; it reads PQHYSYSVET…PQGAHLPVAA (70 aa).

Its function is as follows. Component of the cuticle of tobacco hornworm. The polypeptide is Cuticle protein CP14.6 (CP14.6) (Manduca sexta (Tobacco hawkmoth)).